Reading from the N-terminus, the 219-residue chain is Thiopurine S-methyltransferase (219 aa).

Residues tryptophan 10, leucine 45, glutamate 66, and arginine 123 each coordinate S-adenosyl-L-methionine.

It belongs to the class I-like SAM-binding methyltransferase superfamily. TPMT family.

The protein localises to the cytoplasm. It catalyses the reaction S-adenosyl-L-methionine + a thiopurine = S-adenosyl-L-homocysteine + a thiopurine S-methylether.. The protein is Thiopurine S-methyltransferase of Bordetella pertussis (strain Tohama I / ATCC BAA-589 / NCTC 13251).